Consider the following 187-residue polypeptide: Major allergen Equ c 1 (187 aa).

Residues 1-15 (MKLLLLCLGLILVCA) constitute a signal peptide (or 16, or 21). N-linked (GlcNAc...) asparagine glycans are attached at residues Asn53 and Asn68. Cys83 and Cys176 are disulfide-bonded.

It belongs to the calycin superfamily. Lipocalin family. In terms of assembly, homodimer. In terms of processing, several N-terminal ends may be due to cleavage by signal peptidase at different sites or may be generated by proteolytic processing of the secreted protein. Post-translationally, analysis of the sugar composition shows the presence of GalNAc, Gal, NeuAc, GlcNAc, and Man. May be also O-glycosylated. As to expression, expressed in liver and in sublingual and submaxillary salivary glands. Highly concentrated in secretory fluid such as saliva and urine as well as in hair dandruff extract.

It is found in the secreted. The chain is Major allergen Equ c 1 from Equus caballus (Horse).